Here is a 387-residue protein sequence, read N- to C-terminus: MKALHFGAGNIGRGFIGKLLADAGAQLTFADVNQPLLDALNKRKSYQVNVVGEQARVEEVKNVSAVNSGSPEVVALIAEADIVTTAVGPQILARIAATVAQGLITRHQQGNTRPLNIIACENMVRGTSQLKQHVFAALSEDEQIWVEQHVGFVDSAVDRIVPPSEAGSTDILAVTVETFSEWIVDGTQFKGQPPEIVGMELTDNLMAFVERKLFTLNTGHAITAYLGQLAGHQTIRDAILDPAVRQTVKGAMEESGAVLIKRYAFDPQKHAAYINKILSRFENPYLHDDVERVGRQPLRKLSAGDRLIKPLLGTLEYQLPHDSLVTGIAAAMSYRSEQDPQAQELVTLLAQLGPKAALAQISGLPADSEVVEQAVSVYNAMQQKLAH.

3-14 is an NAD(+) binding site; that stretch reads ALHFGAGNIGRG.

Belongs to the mannitol dehydrogenase family.

The catalysed reaction is D-mannitol 1-phosphate + NAD(+) = beta-D-fructose 6-phosphate + NADH + H(+). This Yersinia pseudotuberculosis serotype O:1b (strain IP 31758) protein is Mannitol-1-phosphate 5-dehydrogenase.